A 679-amino-acid polypeptide reads, in one-letter code: Glycine--tRNA ligase beta subunit (679 aa).

Belongs to the class-II aminoacyl-tRNA synthetase family. In terms of assembly, tetramer of two alpha and two beta subunits.

The protein localises to the cytoplasm. It catalyses the reaction tRNA(Gly) + glycine + ATP = glycyl-tRNA(Gly) + AMP + diphosphate. The chain is Glycine--tRNA ligase beta subunit from Streptococcus agalactiae serotype III (strain NEM316).